Reading from the N-terminus, the 321-residue chain is Gap junction delta-2 protein (321 aa).

Over 1–19 (MGEWTILERLLEAAVQQHS) the chain is Cytoplasmic. The helical transmembrane segment at 20–42 (TMIGRILLTVVVIFRILIVAIVG) threads the bilayer. Residues 43–75 (ETVYDDEQTMFVCNTLQPGCNQACYDRAFPISH) are Extracellular-facing. The chain crosses the membrane as a helical span at residues 76–98 (IRYWVFQIIMVCTPSLCFITYSV). The Cytoplasmic segment spans residues 99-197 (HQSAKQRERR…KLRRQEGISR (99 aa)). Residues 117-141 (DRDPPESMGGPGGTGGGGSGGGKRE) are disordered. Residues 125–137 (GGPGGTGGGGSGG) are compositionally biased toward gly residues. Residues 198 to 220 (FYIIQVVFRNALEIGFLVGQYFL) form a helical membrane-spanning segment. Topologically, residues 221–252 (YGFSVPGLYECDRYPCIKEVECYVSRPTEKTV) are extracellular. Residues 253–275 (FLVFMFAVSGICVVLNLAELNHL) form a helical membrane-spanning segment. Over 276 to 321 (GWRKIKLAVRGAQAKRKSVYEIRNKDLPRVSVPNFGRTQSSDSAYV) the chain is Cytoplasmic.

It belongs to the connexin family. Delta-type subfamily. In terms of assembly, a connexon is composed of a hexamer of connexins.

It is found in the cell membrane. Its subcellular location is the cell junction. The protein resides in the gap junction. Functionally, one gap junction consists of a cluster of closely packed pairs of transmembrane channels, the connexons, through which materials of low MW diffuse from one cell to a neighboring cell. In Bos taurus (Bovine), this protein is Gap junction delta-2 protein (GJD2).